The following is a 452-amino-acid chain: Netrin-5 (452 aa).

The signal sequence occupies residues 1–34 (MTDYRTLFSSPGAGSTVTTPITLSLLLLLSQATS). 11 cysteine pairs are disulfide-bonded: cysteine 173–cysteine 182, cysteine 175–cysteine 191, cysteine 193–cysteine 202, cysteine 205–cysteine 225, cysteine 228–cysteine 240, cysteine 230–cysteine 247, cysteine 249–cysteine 258, cysteine 261–cysteine 275, cysteine 298–cysteine 376, cysteine 302–cysteine 378, and cysteine 317–cysteine 438. Laminin EGF-like domains are found at residues 173-227 (CQCH…PCLP) and 228-277 (CQCH…PCQR). In terms of domain architecture, NTR spans 298–438 (CQGYCNVSVS…LQQKERGGAC (141 aa)). N-linked (GlcNAc...) asparagine glycosylation occurs at asparagine 303.

The protein resides in the secreted. Plays a role in neurogenesis. Prevents motor neuron cell body migration out of the neural tube. The protein is Netrin-5 (Ntn5) of Mus musculus (Mouse).